A 357-amino-acid polypeptide reads, in one-letter code: Ion-translocating oxidoreductase complex subunit D (357 aa).

3 helical membrane passes run 35-55, 88-108, and 119-139; these read VWLY…TVLV, LPPW…VVLG, and LFNP…VEMT. T176 carries the FMN phosphoryl threonine modification. A run of 5 helical transmembrane segments spans residues 209 to 229, 233 to 253, 261 to 281, 295 to 315, and 316 to 336; these read APGS…VYLI, VIAW…ATVF, YADA…FFIA, AVFA…GGYP, and EATA…DHWI.

Belongs to the NqrB/RnfD family. As to quaternary structure, the complex is composed of six subunits: RnfA, RnfB, RnfC, RnfD, RnfE and RnfG. It depends on FMN as a cofactor.

It localises to the cell inner membrane. In terms of biological role, part of a membrane-bound complex that couples electron transfer with translocation of ions across the membrane. In Halorhodospira halophila (strain DSM 244 / SL1) (Ectothiorhodospira halophila (strain DSM 244 / SL1)), this protein is Ion-translocating oxidoreductase complex subunit D.